The chain runs to 327 residues: Undecaprenyl-phosphate 4-deoxy-4-formamido-L-arabinose transferase (327 aa).

2 helical membrane passes run 235 to 255 and 270 to 290; these read LLSL…VLLV and VFTL…GMGL.

The protein belongs to the glycosyltransferase 2 family.

It localises to the cell inner membrane. It carries out the reaction UDP-4-deoxy-4-formamido-beta-L-arabinose + di-trans,octa-cis-undecaprenyl phosphate = 4-deoxy-4-formamido-alpha-L-arabinopyranosyl di-trans,octa-cis-undecaprenyl phosphate + UDP. The protein operates within glycolipid biosynthesis; 4-amino-4-deoxy-alpha-L-arabinose undecaprenyl phosphate biosynthesis; 4-amino-4-deoxy-alpha-L-arabinose undecaprenyl phosphate from UDP-4-deoxy-4-formamido-beta-L-arabinose and undecaprenyl phosphate: step 1/2. It participates in bacterial outer membrane biogenesis; lipopolysaccharide biosynthesis. Catalyzes the transfer of 4-deoxy-4-formamido-L-arabinose from UDP to undecaprenyl phosphate. The modified arabinose is attached to lipid A and is required for resistance to polymyxin and cationic antimicrobial peptides. This Yersinia pestis bv. Antiqua (strain Antiqua) protein is Undecaprenyl-phosphate 4-deoxy-4-formamido-L-arabinose transferase.